A 547-amino-acid chain; its full sequence is Phosphoethanolamine transferase EptA (547 aa).

At 1-9 (MLKRFLKRP) the chain is on the cytoplasmic side. The helical transmembrane segment at 10 to 30 (VLGQIAWLLLFSFYIAVCLNI) threads the bilayer. At 31–47 (AFYKQVLQDLPLNSLRN) the chain is on the periplasmic side. Residues 48 to 68 (VLVFISMPVVAFSVVNSVLTL) form a helical membrane-spanning segment. Over 69–79 (ASFIWLNRLLA) the chain is Cytoplasmic. A helical transmembrane segment spans residues 80–100 (CVFILVGAAAQYFILTYGIII). At 101–123 (DRSMIANMMDTTPAETFALMTPQ) the chain is on the periplasmic side. The chain crosses the membrane as a helical span at residues 124-144 (MVLTLGLSGVLAAVIAFWVKI). At 145–154 (RPATPRLRSG) the chain is on the cytoplasmic side. Residues 155-175 (LYRLASVLISILLVILVAAFF) traverse the membrane as a helical segment. At 176-547 (YKDYASLFRN…ILQPCRRLSE (372 aa)) the chain is on the periplasmic side.

Belongs to the phosphoethanolamine transferase family. EptA subfamily.

The protein localises to the cell inner membrane. The protein operates within bacterial outer membrane biogenesis; LPS lipid A biosynthesis. Catalyzes the addition of a phosphoethanolamine moiety to the lipid A. The phosphoethanolamine modification is required for resistance to polymyxin. The sequence is that of Phosphoethanolamine transferase EptA (eptA) from Salmonella typhimurium (strain LT2 / SGSC1412 / ATCC 700720).